The primary structure comprises 222 residues: Protein-L-isoaspartate O-methyltransferase (222 aa).

Residue Ser-69 is part of the active site.

It belongs to the methyltransferase superfamily. L-isoaspartyl/D-aspartyl protein methyltransferase family.

The protein resides in the cytoplasm. The enzyme catalyses [protein]-L-isoaspartate + S-adenosyl-L-methionine = [protein]-L-isoaspartate alpha-methyl ester + S-adenosyl-L-homocysteine. In terms of biological role, catalyzes the methyl esterification of L-isoaspartyl residues in peptides and proteins that result from spontaneous decomposition of normal L-aspartyl and L-asparaginyl residues. It plays a role in the repair and/or degradation of damaged proteins. The polypeptide is Protein-L-isoaspartate O-methyltransferase (Nitrosomonas eutropha (strain DSM 101675 / C91 / Nm57)).